The primary structure comprises 233 residues: Biosynthetic peptidoglycan transglycosylase (233 aa).

A helical membrane pass occupies residues 8–28 (LIALPVGIFIFFNAYVYGNII).

Belongs to the glycosyltransferase 51 family.

It is found in the cell inner membrane. It catalyses the reaction [GlcNAc-(1-&gt;4)-Mur2Ac(oyl-L-Ala-gamma-D-Glu-L-Lys-D-Ala-D-Ala)](n)-di-trans,octa-cis-undecaprenyl diphosphate + beta-D-GlcNAc-(1-&gt;4)-Mur2Ac(oyl-L-Ala-gamma-D-Glu-L-Lys-D-Ala-D-Ala)-di-trans,octa-cis-undecaprenyl diphosphate = [GlcNAc-(1-&gt;4)-Mur2Ac(oyl-L-Ala-gamma-D-Glu-L-Lys-D-Ala-D-Ala)](n+1)-di-trans,octa-cis-undecaprenyl diphosphate + di-trans,octa-cis-undecaprenyl diphosphate + H(+). It functions in the pathway cell wall biogenesis; peptidoglycan biosynthesis. In terms of biological role, peptidoglycan polymerase that catalyzes glycan chain elongation from lipid-linked precursors. This Neisseria meningitidis serogroup C / serotype 2a (strain ATCC 700532 / DSM 15464 / FAM18) protein is Biosynthetic peptidoglycan transglycosylase.